A 128-amino-acid polypeptide reads, in one-letter code: UPF0102 protein RPB_0420 (128 aa).

The protein belongs to the UPF0102 family.

This chain is UPF0102 protein RPB_0420, found in Rhodopseudomonas palustris (strain HaA2).